We begin with the raw amino-acid sequence, 158 residues long: Glycine/sarcosine/betaine reductase complex component A1 (158 aa).

Sec-44 is an active-site residue. Sec-44 is a non-standard amino acid (selenocysteine).

It belongs to the GrdA family. In terms of assembly, monomer. Component of the glycine, sarcosine and betaine reductase complexes, together with components B and C.

The enzyme catalyses acetyl phosphate + [thioredoxin]-disulfide + NH4(+) + H2O = [thioredoxin]-dithiol + glycine + phosphate + H(+). The catalysed reaction is acetyl phosphate + methylamine + [thioredoxin]-disulfide + H2O = sarcosine + [thioredoxin]-dithiol + phosphate + H(+). It catalyses the reaction acetyl phosphate + trimethylamine + [thioredoxin]-disulfide + H2O = glycine betaine + [thioredoxin]-dithiol + phosphate + H(+). Functionally, in the first step of glycine, betaine and sarcosine reductases, the substrate is bound to component PB via a Schiff base intermediate. Then the PB-activated substrate is nucleophilically attacked by the selenol anion of component PA to transform it to a carboxymethylated selenoether and the respective amine. By action of component PC, acetyl phosphate is formed, leaving component PA in its oxidized state. Finally component PA becomes reduced by the thioredoxin system to start a new catalytic cycle of reductive deamination. The protein is Glycine/sarcosine/betaine reductase complex component A1 (grdA1) of Peptoclostridium acidaminophilum (Eubacterium acidaminophilum).